Consider the following 364-residue polypeptide: Medium-wave-sensitive opsin 2 (364 aa).

A disordered region spans residues 1–23; it reads MAQQWSLQRLAGRHPQDSYEDST. The Extracellular segment spans residues 1-52; the sequence is MAQQWSLQRLAGRHPQDSYEDSTQSSIFTYTNSNSTRGPFEGPNYHIAPRWV. The tract at residues 17-43 is required for 11-cis-retinal regeneration; sequence DSYEDSTQSSIFTYTNSNSTRGPFEGP. A glycan (N-linked (GlcNAc...) asparagine) is linked at Asn-34. Residues 53–77 form a helical membrane-spanning segment; it reads YHLTSVWMIFVVIASVFTNGLVLAA. Topologically, residues 78–89 are cytoplasmic; that stretch reads TMKFKKLRHPLN. The helical transmembrane segment at 90 to 115 threads the bilayer; that stretch reads WILVNLAVADLAETVIASTISVVNQV. The Extracellular portion of the chain corresponds to 116–129; it reads YGYFVLGHPMCVLE. Residues Cys-126 and Cys-203 are joined by a disulfide bond. Residues 130–149 traverse the membrane as a helical segment; the sequence is GYTVSLCGITGLWSLAIISW. The Cytoplasmic segment spans residues 150-168; that stretch reads ERWMVVCKPFGNVRFDAKL. Residues 169-192 form a helical membrane-spanning segment; sequence AIVGIAFSWIWAAVWTAPPIFGWS. The Extracellular segment spans residues 193 to 218; that stretch reads RYWPHGLKTSCGPDVFSGSSYPGVQS. A helical transmembrane segment spans residues 219-246; the sequence is YMIVLMVTCCITPLSIIVLCYLQVWLAI. Residues 247-268 lie on the Cytoplasmic side of the membrane; that stretch reads RAVAKQQKESESTQKAEKEVTR. A helical transmembrane segment spans residues 269–292; that stretch reads MVVVMVLAFCFCWGPYAFFACFAA. Topologically, residues 293-300 are extracellular; sequence ANPGYPFH. The helical transmembrane segment at 301–325 threads the bilayer; it reads PLMAALPAFFAKSATIYNPVIYVFM. Lys-312 bears the N6-(retinylidene)lysine mark. Over 326–364 the chain is Cytoplasmic; sequence NRQFRNCILQLFGKKVDDGSELSSASKTEVSSVSSVSPA.

The protein belongs to the G-protein coupled receptor 1 family. Opsin subfamily. In terms of processing, N-glycosylated. O-glycosylated. Post-translationally, phosphorylated on some or all of the serine and threonine residues present in the C-terminal region.

Its subcellular location is the cell membrane. In terms of biological role, visual pigments are the light-absorbing molecules that mediate vision. They consist of an apoprotein, opsin, covalently linked to cis-retinal. The polypeptide is Medium-wave-sensitive opsin 2 (Homo sapiens (Human)).